A 499-amino-acid chain; its full sequence is Glucose-6-phosphate isomerase (499 aa).

E352 functions as the Proton donor in the catalytic mechanism. Active-site residues include H383 and K487.

The protein belongs to the GPI family.

Its subcellular location is the cytoplasm. The enzyme catalyses alpha-D-glucose 6-phosphate = beta-D-fructose 6-phosphate. Its pathway is carbohydrate biosynthesis; gluconeogenesis. The protein operates within carbohydrate degradation; glycolysis; D-glyceraldehyde 3-phosphate and glycerone phosphate from D-glucose: step 2/4. Catalyzes the reversible isomerization of glucose-6-phosphate to fructose-6-phosphate. This Legionella pneumophila (strain Paris) protein is Glucose-6-phosphate isomerase.